We begin with the raw amino-acid sequence, 637 residues long: 3D-(3,5/4)-trihydroxycyclohexane-1,2-dione hydrolase (637 aa).

Glutamate 65 provides a ligand contact to thiamine diphosphate. Positions 441 to 521 (SLPGDLQRLW…INVLLFDNSG (81 aa)) are thiamine pyrophosphate binding. Residues aspartate 492 and asparagine 519 each contribute to the Mg(2+) site.

It belongs to the TPP enzyme family. It depends on Mg(2+) as a cofactor. Thiamine diphosphate is required as a cofactor.

The enzyme catalyses 3D-3,5/4-trihydroxycyclohexane-1,2-dione + H2O = 5-deoxy-D-glucuronate + H(+). The protein operates within polyol metabolism; myo-inositol degradation into acetyl-CoA; acetyl-CoA from myo-inositol: step 3/7. Its function is as follows. Involved in the cleavage of the C1-C2 bond of 3D-(3,5/4)-trihydroxycyclohexane-1,2-dione (THcHDO) to yield 5-deoxy-glucuronate (5DG). This is 3D-(3,5/4)-trihydroxycyclohexane-1,2-dione hydrolase from Halalkalibacterium halodurans (strain ATCC BAA-125 / DSM 18197 / FERM 7344 / JCM 9153 / C-125) (Bacillus halodurans).